The sequence spans 261 residues: Carnitinyl-CoA dehydratase (261 aa).

Catalysis depends on E111, which acts as the Nucleophile. Residue E131 is the Proton acceptor of the active site.

This sequence belongs to the enoyl-CoA hydratase/isomerase family.

It catalyses the reaction (R)-carnitinyl-CoA = crotonobetainyl-CoA + H2O. The protein operates within amine and polyamine metabolism; carnitine metabolism. Functionally, catalyzes the reversible dehydration of L-carnitinyl-CoA to crotonobetainyl-CoA. The sequence is that of Carnitinyl-CoA dehydratase from Proteus mirabilis (strain HI4320).